Reading from the N-terminus, the 302-residue chain is 4-hydroxy-tetrahydrodipicolinate synthase (302 aa).

Residue Thr46 participates in pyruvate binding. The active-site Proton donor/acceptor is the Tyr134. The active-site Schiff-base intermediate with substrate is Lys162. Ile204 lines the pyruvate pocket.

This sequence belongs to the DapA family. Homotetramer; dimer of dimers.

Its subcellular location is the cytoplasm. The catalysed reaction is L-aspartate 4-semialdehyde + pyruvate = (2S,4S)-4-hydroxy-2,3,4,5-tetrahydrodipicolinate + H2O + H(+). It participates in amino-acid biosynthesis; L-lysine biosynthesis via DAP pathway; (S)-tetrahydrodipicolinate from L-aspartate: step 3/4. Functionally, catalyzes the condensation of (S)-aspartate-beta-semialdehyde [(S)-ASA] and pyruvate to 4-hydroxy-tetrahydrodipicolinate (HTPA). In Xanthomonas axonopodis pv. citri (strain 306), this protein is 4-hydroxy-tetrahydrodipicolinate synthase.